The primary structure comprises 233 residues: Forkhead box protein L3 (233 aa).

A DNA-binding region (fork-head) is located at residues arginine 32–arginine 130. The segment covering tyrosine 125–proline 134 has biased composition (basic residues). The tract at residues tyrosine 125 to tyrosine 198 is disordered. The segment covering arginine 175–proline 184 has biased composition (pro residues). Over residues glycine 185 to phenylalanine 194 the composition is skewed to basic and acidic residues.

The protein resides in the nucleus. Probable transcriptional regulator. The polypeptide is Forkhead box protein L3 (Homo sapiens (Human)).